Here is a 536-residue protein sequence, read N- to C-terminus: MEKIRERFKQSKSSNESVRLRKRSSILYSTDDRKLQTLKIFGINITVFIVLVRLLNCVLVQTSFVPDEFWQSLEISHRMVFGYGYETWEWKEGIRGYSYPLLFALMYKLLQLISYDTVYLLVFVPRVFQALLAAYADVKLYKLILQWETPDVAKWTCFCQLCSWFAWFCCSRTLTNTTETALTTLALCFYPLPGSKTHSSWKYLTLVSLAVVIRPTALIVWFPLIFYHFCTDQDKLKLITHRYFPIGVLALGVSTLIDSFFYGKWIFVQWNFLKFNVLHNVGEFYGSHPWHWYWTQGLPVVIGPHLPLVLHGCLLSTRKHTILLLTIIWTTAVYSLLAHKEFRFIYPVLPFCMIFCGLSLAKLQAWRKAAAGALLLFNLCPALYTGLVHQRGALDVMHVLQPLCVSSQSPNPPELLFLMPCHSTPLYSHLHCPLKLRFLECPPDLTGRQDYMDEADVFFSDPLHWLNTSFPLRSTLPSHLVLFDSLQKEISSFLEENSFAKQAEIFHTHFPEGRVGKNILIYSRRSEMKINEGFIL.

N-linked (GlcNAc...) asparagine glycosylation occurs at asparagine 15. Helical transmembrane passes span isoleucine 40–valine 60 and valine 118–valine 138. Asparagine 176 carries N-linked (GlcNAc...) asparagine glycosylation. 6 consecutive transmembrane segments (helical) span residues leucine 206 to phenylalanine 226, tyrosine 243 to glycine 263, glycine 297 to threonine 317, isoleucine 322 to phenylalanine 342, phenylalanine 344 to glutamine 364, and alanine 369 to histidine 389. An N-linked (GlcNAc...) asparagine glycan is attached at asparagine 467.

This sequence belongs to the glycosyltransferase 22 family. PIGB subfamily.

The protein resides in the endoplasmic reticulum membrane. It functions in the pathway glycolipid biosynthesis; glycosylphosphatidylinositol-anchor biosynthesis. Functionally, alpha-1,2-mannosyltransferase that catalyzes the transfer of the third mannose, via an alpha-1,2 bond, from a dolichol-phosphate-mannose (Dol-P-Man) to an alpha-D-Man-(1-&gt;6)-2-PEtn-alpha-D-Man-(1-&gt;4)-alpha-D-GlcN-(1-&gt;6)-(1-radyl,2-acyl-sn-glycero-3-phospho)-2-acyl-inositol intermediate to generate an alpha-D-Man-(1-&gt;2)-alpha-D-Man-(1-&gt;6)-2-PEtn-alpha-D-Man-(1-&gt;4)-alpha-D-GlcN-(1-&gt;6)-(1-radyl,2-acyl-sn-glycero-3-phospho)-2-acyl-inositol (also termed H6) and participates in the nineth step of the glycosylphosphatidylinositol-anchor biosynthesis. May also add the third mannose to an alpha-D-Man-(1-&gt;6)-alpha-D-Man-(1-&gt;4)-alpha-D-GlcN-(1-&gt;6)-(1-radyl,2-acyl-sn-glycero-3-phospho)-2-acyl-inositol (also termed H3) intermediate generating an alpha-D-Man-(1-&gt;2)-alpha-D-Man-(1-&gt;6)-alpha-D-Man-(1-&gt;4)-alpha-D-GlcN-(1-&gt;6)-(1-radyl,2-acyl-sn-glycero-3-phospho)-2-acyl-inositol (also termed H4). The protein is GPI alpha-1,2-mannosyltransferase 3 of Danio rerio (Zebrafish).